A 507-amino-acid polypeptide reads, in one-letter code: ATP synthase subunit alpha, chloroplastic (507 aa).

Residue glycine 170–threonine 177 participates in ATP binding. Residue threonine 257 is modified to Phosphothreonine.

Belongs to the ATPase alpha/beta chains family. In terms of assembly, F-type ATPases have 2 components, CF(1) - the catalytic core - and CF(0) - the membrane proton channel. CF(1) has five subunits: alpha(3), beta(3), gamma(1), delta(1), epsilon(1). CF(0) has four main subunits: a, b, b' and c.

It localises to the plastid. The protein localises to the chloroplast thylakoid membrane. It catalyses the reaction ATP + H2O + 4 H(+)(in) = ADP + phosphate + 5 H(+)(out). Its function is as follows. Produces ATP from ADP in the presence of a proton gradient across the membrane. The alpha chain is a regulatory subunit. The polypeptide is ATP synthase subunit alpha, chloroplastic (Draba nemorosa (Woodland whitlowgrass)).